The chain runs to 235 residues: Thrombin-like enzyme bilineobin (235 aa).

Positions 1 to 227 (IIGGDECNIN…HLDWIQSIIA (227 aa)) constitute a Peptidase S1 domain. 6 disulfide bridges follow: Cys7–Cys141, Cys28–Cys44, Cys78–Cys234, Cys120–Cys188, Cys152–Cys167, and Cys178–Cys203. The Charge relay system role is filled by His43. N-linked (GlcNAc...) asparagine glycans are attached at residues Asn45, Asn57, and Asn81. Catalysis depends on Asp88, which acts as the Charge relay system. N-linked (GlcNAc...) asparagine glycosylation is found at Asn132 and Asn148. Ser182 (charge relay system) is an active-site residue. Residue Asn229 is glycosylated (N-linked (GlcNAc...) asparagine).

The protein belongs to the peptidase S1 family. Snake venom subfamily. As to quaternary structure, monomer. Post-translationally, glycosylated. In terms of tissue distribution, expressed by the venom gland.

It localises to the secreted. Not inhibited by hirudin. In terms of biological role, thrombin-like snake venom serine protease that has coagulant activity by releasing fibrinopeptides A and B from fibrinogen alpha (FGA) and beta (FGB), with a preference for beta chain. This chain is Thrombin-like enzyme bilineobin, found in Agkistrodon bilineatus (Cantil).